A 79-amino-acid polypeptide reads, in one-letter code: Acyl carrier protein (79 aa).

A Carrier domain is found at 2–77 (SDIEERVKKI…SAIDYVNAHK (76 aa)). Ser-37 bears the O-(pantetheine 4'-phosphoryl)serine mark.

Belongs to the acyl carrier protein (ACP) family. Post-translationally, 4'-phosphopantetheine is transferred from CoA to a specific serine of apo-ACP by AcpS. This modification is essential for activity because fatty acids are bound in thioester linkage to the sulfhydryl of the prosthetic group.

The protein resides in the cytoplasm. Its pathway is lipid metabolism; fatty acid biosynthesis. Carrier of the growing fatty acid chain in fatty acid biosynthesis. The polypeptide is Acyl carrier protein (Pseudoalteromonas atlantica (strain T6c / ATCC BAA-1087)).